We begin with the raw amino-acid sequence, 364 residues long: Phosphoserine aminotransferase (364 aa).

Arg-42 contributes to the L-glutamate binding site. Residues Gly-76–Arg-77, Trp-102, Thr-156, Asp-175, and Gln-198 each bind pyridoxal 5'-phosphate. Lys-199 is modified (N6-(pyridoxal phosphate)lysine). Position 240-241 (Asn-240–Thr-241) interacts with pyridoxal 5'-phosphate.

The protein belongs to the class-V pyridoxal-phosphate-dependent aminotransferase family. SerC subfamily. As to quaternary structure, homodimer. The cofactor is pyridoxal 5'-phosphate.

The protein resides in the cytoplasm. The enzyme catalyses O-phospho-L-serine + 2-oxoglutarate = 3-phosphooxypyruvate + L-glutamate. It carries out the reaction 4-(phosphooxy)-L-threonine + 2-oxoglutarate = (R)-3-hydroxy-2-oxo-4-phosphooxybutanoate + L-glutamate. It participates in amino-acid biosynthesis; L-serine biosynthesis; L-serine from 3-phospho-D-glycerate: step 2/3. It functions in the pathway cofactor biosynthesis; pyridoxine 5'-phosphate biosynthesis; pyridoxine 5'-phosphate from D-erythrose 4-phosphate: step 3/5. Functionally, catalyzes the reversible conversion of 3-phosphohydroxypyruvate to phosphoserine and of 3-hydroxy-2-oxo-4-phosphonooxybutanoate to phosphohydroxythreonine. This is Phosphoserine aminotransferase from Shewanella woodyi (strain ATCC 51908 / MS32).